Reading from the N-terminus, the 239-residue chain is Heptaprenylglyceryl phosphate synthase (239 aa).

Lysine 12 contacts sn-glycerol 1-phosphate. Positions 14 and 40 each coordinate Mg(2+). Sn-glycerol 1-phosphate is bound by residues 159–164, glycine 189, and 209–210; these read YLEYSG and GN.

Belongs to the GGGP/HepGP synthase family. Group I subfamily. As to quaternary structure, homodimer. Requires Mg(2+) as cofactor.

It carries out the reaction sn-glycerol 1-phosphate + all-trans-heptaprenyl diphosphate = 3-heptaprenyl-sn-glycero-1-phosphate + diphosphate. It participates in membrane lipid metabolism; glycerophospholipid metabolism. Its function is as follows. Prenyltransferase that catalyzes in vivo the transfer of the heptaprenyl moiety of heptaprenyl pyrophosphate (HepPP; 35 carbon atoms) to the C3 hydroxyl of sn-glycerol-1-phosphate (G1P), producing heptaprenylglyceryl phosphate (HepGP). This reaction is an ether-bond-formation step in the biosynthesis of archaea-type G1P-based membrane lipids found in Bacillales. The polypeptide is Heptaprenylglyceryl phosphate synthase (Geobacillus thermodenitrificans (strain NG80-2)).